The sequence spans 253 residues: MICOS complex subunit mic25 (253 aa).

The tract at residues methionine 1 to valine 89 is disordered. A lipid anchor (N-myristoyl glycine) is attached at glycine 2. Basic and acidic residues predominate over residues arginine 28–serine 44. Low complexity predominate over residues serine 48–serine 64. Residues alanine 94–asparagine 178 adopt a coiled-coil conformation. Residues aspartate 206–leucine 248 enclose the CHCH domain. 2 consecutive short sequence motifs (cx9C motif) follow at residues cysteine 209 to cysteine 219 and cysteine 230 to cysteine 240. Disulfide bonds link cysteine 209-cysteine 240 and cysteine 219-cysteine 230.

This sequence belongs to the MICOS complex subunit Mic19 family. Metazoan Mic25 subfamily. Component of the mitochondrial contact site and cristae organizing system (MICOS) complex (also known as MINOS or MitOS complex).

The protein resides in the mitochondrion inner membrane. In terms of biological role, component of the MICOS complex, a large protein complex of the mitochondrial inner membrane that plays crucial roles in the maintenance of crista junctions, inner membrane architecture, and formation of contact sites to the outer membrane. The sequence is that of MICOS complex subunit mic25 (chchd6) from Xenopus tropicalis (Western clawed frog).